Reading from the N-terminus, the 263-residue chain is Type III pantothenate kinase (263 aa).

An ATP-binding site is contributed by 6–13 (DVGNTNIK). Residue 108 to 111 (GSDR) participates in substrate binding. The Proton acceptor role is filled by Asp110. Position 131 (Asp131) interacts with K(+). Thr134 serves as a coordination point for ATP. Thr187 is a substrate binding site.

This sequence belongs to the type III pantothenate kinase family. As to quaternary structure, homodimer. Requires NH4(+) as cofactor. It depends on K(+) as a cofactor.

It localises to the cytoplasm. It carries out the reaction (R)-pantothenate + ATP = (R)-4'-phosphopantothenate + ADP + H(+). It functions in the pathway cofactor biosynthesis; coenzyme A biosynthesis; CoA from (R)-pantothenate: step 1/5. Catalyzes the phosphorylation of pantothenate (Pan), the first step in CoA biosynthesis. In Anaplasma phagocytophilum (strain HZ), this protein is Type III pantothenate kinase.